The primary structure comprises 325 residues: Probable WRKY transcription factor 11 (325 aa).

The segment at residues 240–306 (KIADIPPDEY…YEGEHRHNQS (67 aa)) is a DNA-binding region (WRKY).

It belongs to the WRKY group II-d family. In young, mature and senescent leaves.

The protein localises to the nucleus. In terms of biological role, transcription factor. Interacts specifically with the W box (5'-(T)TGAC[CT]-3'), a frequently occurring elicitor-responsive cis-acting element. Regulates rhizobacterium B.cereus AR156-induced systemic resistance (ISR) to P.syringae pv. tomato DC3000, probably by activating the jasmonic acid (JA)- signaling pathway. This Arabidopsis thaliana (Mouse-ear cress) protein is Probable WRKY transcription factor 11 (WRKY11).